Consider the following 204-residue polypeptide: Thymidine kinase (204 aa).

ATP is bound by residues 23 to 30 and 95 to 98; these read GSMFSGKT and DEAQ. The Proton acceptor role is filled by glutamate 96. Positions 152, 155, 184, and 187 each coordinate Zn(2+).

It belongs to the thymidine kinase family. Homotetramer.

The protein resides in the cytoplasm. The enzyme catalyses thymidine + ATP = dTMP + ADP + H(+). This is Thymidine kinase from Porphyromonas gingivalis (strain ATCC 33277 / DSM 20709 / CIP 103683 / JCM 12257 / NCTC 11834 / 2561).